The sequence spans 131 residues: Profilin-1 (131 aa).

It belongs to the profilin family. As to quaternary structure, occurs in many kinds of cells as a complex with monomeric actin in a 1:1 ratio. In terms of tissue distribution, expressed at low levels roots, leaves, stems, flowers and siliques. Expressed in leaf epidermal cells, trichomes and stem epidermal cells. Detected in phloem exudates (at protein level).

It localises to the cytoplasm. The protein resides in the cytoskeleton. In terms of biological role, binds to actin monomers and regulates the organization of the actin cytoskeleton. At high concentrations, profilin prevents the polymerization of actin, whereas it enhances it at low concentrations. At low concentrations, associates with the poly-proline motif of formins to enhance actin filament elongation rate. Binds ACT1, ACT7 and ACT11 and inhibits actin polymerization. Coordinates the stochastic dynamic properties of actin filaments by modulating formin-mediated actin nucleation and assembly during axial cell expansion. Binds G-actin and poly-L-proline in vitro. Inhibits cell growth of various pathogenic fungal strains. May play a role as antifungal proteins in the defense system against fungal pathogen attacks. The sequence is that of Profilin-1 from Arabidopsis thaliana (Mouse-ear cress).